The following is an 880-amino-acid chain: DNA double-strand break repair Rad50 ATPase (880 aa).

ATP is bound by residues arginine 12, 32 to 38, and glutamine 138; that span reads NGSGKSS. 2 coiled-coil regions span residues 225–336 and 391–744; these read GELE…VIKE and GEVI…QALN. Residues 397-494 enclose the Zinc-hook domain; it reads LESLEKERTE…NLRKLEIKLR (98 aa). Positions 442 and 445 each coordinate Zn(2+). 789-794 serves as a coordination point for ATP; that stretch reads FLSGGE.

This sequence belongs to the SMC family. RAD50 subfamily. As to quaternary structure, homodimer. Forms a heterotetramer composed of two Mre11 subunits and two Rad50 subunits. The cofactor is Zn(2+).

Part of the Rad50/Mre11 complex, which is involved in the early steps of DNA double-strand break (DSB) repair. The complex may facilitate opening of the processed DNA ends to aid in the recruitment of HerA and NurA. Rad50 controls the balance between DNA end bridging and DNA resection via ATP-dependent structural rearrangements of the Rad50/Mre11 complex. This is DNA double-strand break repair Rad50 ATPase from Pyrococcus abyssi (strain GE5 / Orsay).